Here is a 353-residue protein sequence, read N- to C-terminus: uncharacterized protein (353 aa).

Positions 1–18 (MKFVLFAQLAAVAAPAIA) are cleaved as a signal peptide. The interval 94 to 119 (EGGNVRRVPGGPSQSARQIGDSSTPM) is disordered. Polar residues predominate over residues 105 to 119 (PSQSARQIGDSSTPM). N-linked (GlcNAc...) asparagine glycosylation is found at asparagine 165 and asparagine 312.

Belongs to the glycosyl hydrolase 3 family.

It localises to the secreted. This is an uncharacterized protein from Arthroderma benhamiae (strain ATCC MYA-4681 / CBS 112371) (Trichophyton mentagrophytes).